Reading from the N-terminus, the 419-residue chain is Histidine--tRNA ligase (419 aa).

The protein belongs to the class-II aminoacyl-tRNA synthetase family.

It localises to the cytoplasm. The enzyme catalyses tRNA(His) + L-histidine + ATP = L-histidyl-tRNA(His) + AMP + diphosphate + H(+). The protein is Histidine--tRNA ligase of Pyrobaculum arsenaticum (strain DSM 13514 / JCM 11321 / PZ6).